We begin with the raw amino-acid sequence, 690 residues long: Protein arginine N-methyltransferase 7 (690 aa).

2 SAM-dependent MTase PRMT-type domains span residues 14–357 and 366–690; these read QNSW…YSLW and TKSV…QKKL.

The protein belongs to the class I-like SAM-binding methyltransferase superfamily. Protein arginine N-methyltransferase family. PRMT7 subfamily.

Its function is as follows. Essential arginine methyltransferase that can both catalyze the formation of omega-N monomethylarginine (MMA) and symmetrical dimethylarginine (sDMA). Specifically mediates the symmetrical dimethylation of arginine residues in the small nuclear ribonucleoproteins SmD1 and SmD3. The protein is Protein arginine N-methyltransferase 7 (Art7) of Drosophila yakuba (Fruit fly).